Reading from the N-terminus, the 148-residue chain is Large ribosomal subunit protein uL13 (148 aa).

It belongs to the universal ribosomal protein uL13 family. Part of the 50S ribosomal subunit.

In terms of biological role, this protein is one of the early assembly proteins of the 50S ribosomal subunit, although it is not seen to bind rRNA by itself. It is important during the early stages of 50S assembly. This is Large ribosomal subunit protein uL13 from Lacticaseibacillus casei (strain BL23) (Lactobacillus casei).